Reading from the N-terminus, the 275-residue chain is Energy-coupling factor transporter ATP-binding protein EcfA1 (275 aa).

The ABC transporter domain maps to 5 to 240 (IDVKNLSFRY…NDLDQIGLDD (236 aa)). 40-47 (GHNGSGKS) is an ATP binding site.

It belongs to the ABC transporter superfamily. Energy-coupling factor EcfA family. In terms of assembly, forms a stable energy-coupling factor (ECF) transporter complex composed of 2 membrane-embedded substrate-binding proteins (S component), 2 ATP-binding proteins (A component) and 2 transmembrane proteins (T component).

Its subcellular location is the cell membrane. ATP-binding (A) component of a common energy-coupling factor (ECF) ABC-transporter complex. Unlike classic ABC transporters this ECF transporter provides the energy necessary to transport a number of different substrates. The sequence is that of Energy-coupling factor transporter ATP-binding protein EcfA1 from Streptococcus pneumoniae serotype 4 (strain ATCC BAA-334 / TIGR4).